The chain runs to 284 residues: Mevalonate kinase (284 aa).

86 to 96 lines the ATP pocket; it reads PIGSGLGSSAA. The active-site Proton acceptor is the aspartate 137.

It belongs to the GHMP kinase family. Mevalonate kinase subfamily. In terms of assembly, homodimer. It depends on Mg(2+) as a cofactor.

It localises to the cytoplasm. The catalysed reaction is (R)-mevalonate + ATP = (R)-5-phosphomevalonate + ADP + H(+). Its pathway is isoprenoid biosynthesis; isopentenyl diphosphate biosynthesis via mevalonate pathway; isopentenyl diphosphate from (R)-mevalonate: step 1/3. Catalyzes the phosphorylation of (R)-mevalonate (MVA) to (R)-mevalonate 5-phosphate (MVAP). Functions in the mevalonate (MVA) pathway leading to isopentenyl diphosphate (IPP), a key precursor for the biosynthesis of isoprenoid compounds such as archaeal membrane lipids. The chain is Mevalonate kinase from Archaeoglobus fulgidus (strain ATCC 49558 / DSM 4304 / JCM 9628 / NBRC 100126 / VC-16).